Here is a 197-residue protein sequence, read N- to C-terminus: Probable molybdenum cofactor guanylyltransferase (197 aa).

GTP contacts are provided by residues 10 to 12 (LCG), K22, D73, and D102. Residue D102 participates in Mg(2+) binding.

The protein belongs to the MobA family. It depends on Mg(2+) as a cofactor.

The protein localises to the cytoplasm. It catalyses the reaction Mo-molybdopterin + GTP + H(+) = Mo-molybdopterin guanine dinucleotide + diphosphate. Transfers a GMP moiety from GTP to Mo-molybdopterin (Mo-MPT) cofactor (Moco or molybdenum cofactor) to form Mo-molybdopterin guanine dinucleotide (Mo-MGD) cofactor. This is Probable molybdenum cofactor guanylyltransferase from Methanothermobacter thermautotrophicus (strain ATCC 29096 / DSM 1053 / JCM 10044 / NBRC 100330 / Delta H) (Methanobacterium thermoautotrophicum).